The following is a 511-amino-acid chain: MIQIKRALISVSDKSDIVEFAQFLNQNGVEIISTGGTLKLLKDNGIQAIAIDDYTGFPEILEGRVKTLHPKVHGGLLGVVSNPAHKQKMEELKIPKIDLVVVNLYPFLKTVSKPGVQLEEAIENIDIGGPSMIRSAAKNYKHTLVLTDPSDYEEVRVLIASGGISEEVAAGYMRKAFSHTAMYDTAISSWFHKQAGDVFPDVLNLSFLKKQKLRYGENPHQAASFYEPLFVKSDFSPLQGKELSFNNMLDFDAAFHISSLLPENTVCIIKHLNPCGIAYADDPLEAFQLARRTDPISAFGGVIGIKGIVHGELATAITENFVEGVIAQKFTPEALELFSKKPNIRLIEIENFKEALDELDLRPIHHGLLIQERDYTTITEKDLKVVTKKQPTSDDIRGLMFAWSCVRFIKSNAIVYTEENATLGIGAGQMSRVDSVQLGANKALNVGLSVVGSYVASDAFFPFRDGIDALAKAGAKAIIQPGGSVRDAEVIQAADEHGLIMVFTGMRHFRH.

The MGS-like domain occupies 1–147; that stretch reads MIQIKRALIS…KNYKHTLVLT (147 aa).

It belongs to the PurH family.

It catalyses the reaction (6R)-10-formyltetrahydrofolate + 5-amino-1-(5-phospho-beta-D-ribosyl)imidazole-4-carboxamide = 5-formamido-1-(5-phospho-D-ribosyl)imidazole-4-carboxamide + (6S)-5,6,7,8-tetrahydrofolate. The catalysed reaction is IMP + H2O = 5-formamido-1-(5-phospho-D-ribosyl)imidazole-4-carboxamide. It participates in purine metabolism; IMP biosynthesis via de novo pathway; 5-formamido-1-(5-phospho-D-ribosyl)imidazole-4-carboxamide from 5-amino-1-(5-phospho-D-ribosyl)imidazole-4-carboxamide (10-formyl THF route): step 1/1. Its pathway is purine metabolism; IMP biosynthesis via de novo pathway; IMP from 5-formamido-1-(5-phospho-D-ribosyl)imidazole-4-carboxamide: step 1/1. This chain is Bifunctional purine biosynthesis protein PurH, found in Leptospira borgpetersenii serovar Hardjo-bovis (strain JB197).